The chain runs to 136 residues: Protein BUNDLE SHEATH DEFECTIVE 2, chloroplastic (136 aa).

Residues 1–56 (MANSLCFFSSPPTFCFQSPSKNPKPSHFFSTNDNTSSLVQKRELLQTSRSQSFEVK) constitute a chloroplast transit peptide. Residues 62-133 (PQGTKPNSLV…AGFIGGFLST (72 aa)) form a CR-type zinc finger. Zn(2+) is bound by residues C72, C75, E78, C80, C83, C86, C107, C110, E115, C118, and C121.

It belongs to the BSD2 chaperone family. As to quaternary structure, interacts with the RuBisCo large subunit (RbcL) assembled as an intermediate complex made of eight RbcL and eight BSD2 subunits.

It is found in the plastid. It localises to the chloroplast stroma. Functionally, chloroplast chaperone required for RuBisCo biogenesis and translational regulation of the RuBisCo large subunit (RbcL). Stabilizes an end-state assembly intermediate of eight RbcL subunits until the small subunits (RBCSs) become available to produce a complete stable RuBisCo complex containing eight small and eight large subunits. In Arabidopsis thaliana (Mouse-ear cress), this protein is Protein BUNDLE SHEATH DEFECTIVE 2, chloroplastic.